We begin with the raw amino-acid sequence, 472 residues long: Uronate isomerase (472 aa).

Belongs to the metallo-dependent hydrolases superfamily. Uronate isomerase family.

It catalyses the reaction D-glucuronate = D-fructuronate. It carries out the reaction aldehydo-D-galacturonate = keto-D-tagaturonate. It functions in the pathway carbohydrate metabolism; pentose and glucuronate interconversion. This is Uronate isomerase from Xanthomonas oryzae pv. oryzae (strain MAFF 311018).